We begin with the raw amino-acid sequence, 144 residues long: L-fucose mutarotase (144 aa).

Residue histidine 22 is the Proton donor of the active site. Residues aspartate 30, arginine 109, and 131-133 (YGN) contribute to the substrate site.

This sequence belongs to the RbsD / FucU family. FucU mutarotase subfamily. As to quaternary structure, homodecamer.

The protein resides in the cytoplasm. It catalyses the reaction alpha-L-fucose = beta-L-fucose. Its pathway is carbohydrate metabolism; L-fucose metabolism. Functionally, involved in the anomeric conversion of L-fucose. In Haemophilus influenzae (strain 86-028NP), this protein is L-fucose mutarotase.